Reading from the N-terminus, the 365-residue chain is Methionine import ATP-binding protein MetN (365 aa).

Positions 26-261 (VRLVDLKRRF…PQSDITKSLL (236 aa)) constitute an ABC transporter domain. 58–65 (GRSGAGKS) provides a ligand contact to ATP.

Belongs to the ABC transporter superfamily. Methionine importer (TC 3.A.1.24) family. In terms of assembly, the complex is composed of two ATP-binding proteins (MetN), two transmembrane proteins (MetI) and a solute-binding protein (MetQ).

The protein resides in the cell inner membrane. The enzyme catalyses L-methionine(out) + ATP + H2O = L-methionine(in) + ADP + phosphate + H(+). The catalysed reaction is D-methionine(out) + ATP + H2O = D-methionine(in) + ADP + phosphate + H(+). In terms of biological role, part of the ABC transporter complex MetNIQ involved in methionine import. Responsible for energy coupling to the transport system. This Mesorhizobium japonicum (strain LMG 29417 / CECT 9101 / MAFF 303099) (Mesorhizobium loti (strain MAFF 303099)) protein is Methionine import ATP-binding protein MetN.